Consider the following 78-residue polypeptide: Acyl carrier protein (78 aa).

Residues 2 to 77 (SNIEQQVKKI…LAIDYINAHN (76 aa)) enclose the Carrier domain. Ser-37 carries the O-(pantetheine 4'-phosphoryl)serine modification.

It belongs to the acyl carrier protein (ACP) family. Post-translationally, 4'-phosphopantetheine is transferred from CoA to a specific serine of apo-ACP by AcpS. This modification is essential for activity because fatty acids are bound in thioester linkage to the sulfhydryl of the prosthetic group.

It localises to the cytoplasm. Its pathway is lipid metabolism; fatty acid biosynthesis. Functionally, carrier of the growing fatty acid chain in fatty acid biosynthesis. The chain is Acyl carrier protein from Neisseria meningitidis serogroup C / serotype 2a (strain ATCC 700532 / DSM 15464 / FAM18).